The following is an 89-amino-acid chain: Small ribosomal subunit protein bS18 (89 aa).

It belongs to the bacterial ribosomal protein bS18 family. In terms of assembly, part of the 30S ribosomal subunit. Forms a tight heterodimer with protein bS6.

In terms of biological role, binds as a heterodimer with protein bS6 to the central domain of the 16S rRNA, where it helps stabilize the platform of the 30S subunit. In Phocaeicola vulgatus (strain ATCC 8482 / DSM 1447 / JCM 5826 / CCUG 4940 / NBRC 14291 / NCTC 11154) (Bacteroides vulgatus), this protein is Small ribosomal subunit protein bS18.